A 465-amino-acid polypeptide reads, in one-letter code: A-type ATP synthase subunit B (465 aa).

Belongs to the ATPase alpha/beta chains family. In terms of assembly, has multiple subunits with at least A(3), B(3), C, D, E, F, H, I and proteolipid K(x).

It localises to the cell membrane. Component of the A-type ATP synthase that produces ATP from ADP in the presence of a proton gradient across the membrane. The B chain is a regulatory subunit. This is A-type ATP synthase subunit B from Thermococcus onnurineus (strain NA1).